A 653-amino-acid polypeptide reads, in one-letter code: Zinc finger protein 59 (653 aa).

One can recognise a KRAB domain in the interval Val-14–Pro-86. 16 consecutive C2H2-type zinc fingers follow at residues Tyr-172–His-194, Tyr-200–His-222, Phe-256–His-278, Tyr-284–His-306, Phe-312–His-334, Phe-340–His-362, Phe-368–His-390, Leu-396–His-418, Phe-424–His-446, Tyr-452–His-474, Phe-480–His-502, Phe-508–His-530, Phe-536–His-558, Tyr-564–His-586, Phe-592–His-614, and Phe-620–His-642.

This sequence belongs to the krueppel C2H2-type zinc-finger protein family. Expressed predominantly in the testis (at protein level).

Its subcellular location is the nucleus. Its function is as follows. May have a role during differentiation processes. This chain is Zinc finger protein 59 (Zfp59), found in Mus musculus (Mouse).